A 49-amino-acid chain; its full sequence is uncharacterized protein (49 aa).

A helical membrane pass occupies residues L23–I43.

The protein resides in the host membrane. This is an uncharacterized protein from Spiroplasma melliferum (SpV1).